The sequence spans 479 residues: Aspartyl/glutamyl-tRNA(Asn/Gln) amidotransferase subunit B (479 aa).

It belongs to the GatB/GatE family. GatB subfamily. In terms of assembly, heterotrimer of A, B and C subunits.

It catalyses the reaction L-glutamyl-tRNA(Gln) + L-glutamine + ATP + H2O = L-glutaminyl-tRNA(Gln) + L-glutamate + ADP + phosphate + H(+). It carries out the reaction L-aspartyl-tRNA(Asn) + L-glutamine + ATP + H2O = L-asparaginyl-tRNA(Asn) + L-glutamate + ADP + phosphate + 2 H(+). Its function is as follows. Allows the formation of correctly charged Asn-tRNA(Asn) or Gln-tRNA(Gln) through the transamidation of misacylated Asp-tRNA(Asn) or Glu-tRNA(Gln) in organisms which lack either or both of asparaginyl-tRNA or glutaminyl-tRNA synthetases. The reaction takes place in the presence of glutamine and ATP through an activated phospho-Asp-tRNA(Asn) or phospho-Glu-tRNA(Gln). In Mesoplasma florum (strain ATCC 33453 / NBRC 100688 / NCTC 11704 / L1) (Acholeplasma florum), this protein is Aspartyl/glutamyl-tRNA(Asn/Gln) amidotransferase subunit B.